The primary structure comprises 344 residues: Protein L-Myc-1-A (344 aa).

Disordered stretches follow at residues 100 to 162 and 209 to 261; these read RLTT…DDEI and PPEP…EDIV. Polar residues-rich tracts occupy residues 102–112, 123–133, and 236–255; these read TTASPRATNPQ, PGVNSIEQNAN, and PALQQCSSPMPGSPLASGSS. The bHLH domain maps to 261–313; it reads VKKKNHNYLERKRRNDLRSRFLALREEVPSLTRSTKTPKVVVLSKATEFLKGL. Residues 313–341 are leucine-zipper; that stretch reads LVIQEQQLTAEKFKLWSRHQQLLRRISHL.

As to quaternary structure, efficient DNA binding requires dimerization with another bHLH protein. Binds DNA as a heterodimer with MAX. High levels in oocytes, modest levels in kidney and low levels in spleen.

It is found in the nucleus. The chain is Protein L-Myc-1-A (mycl1-a) from Xenopus laevis (African clawed frog).